Consider the following 260-residue polypeptide: Snake venom serine protease homolog KN7 (260 aa).

An N-terminal signal peptide occupies residues 1 to 18 (MVLIRVLANLLILQLSYA). The propeptide occupies 19 to 24 (QKSSEL). Positions 25–251 (IIGGDECNIN…HLDWIKSIIA (227 aa)) constitute a Peptidase S1 domain. Cystine bridges form between cysteine 31–cysteine 165, cysteine 52–cysteine 68, cysteine 100–cysteine 258, cysteine 144–cysteine 212, cysteine 176–cysteine 191, and cysteine 202–cysteine 227. Asparagine 83, asparagine 123, and asparagine 124 each carry an N-linked (GlcNAc...) asparagine glycan.

Belongs to the peptidase S1 family. Snake venom subfamily. As to expression, expressed by the venom gland.

Its subcellular location is the secreted. Functionally, snake venom serine protease homolog that may act in the hemostasis system of the prey. This Trimeresurus stejnegeri (Chinese green tree viper) protein is Snake venom serine protease homolog KN7.